The primary structure comprises 210 residues: Ion-translocating oxidoreductase complex subunit G (210 aa).

The helical transmembrane segment at 9–29 (GVTLAVFAAITTGLTAVINAV) threads the bilayer. Thr-175 carries the FMN phosphoryl threonine modification.

It belongs to the RnfG family. The complex is composed of six subunits: RnfA, RnfB, RnfC, RnfD, RnfE and RnfG. FMN serves as cofactor.

Its subcellular location is the cell inner membrane. Its function is as follows. Part of a membrane-bound complex that couples electron transfer with translocation of ions across the membrane. This Erwinia tasmaniensis (strain DSM 17950 / CFBP 7177 / CIP 109463 / NCPPB 4357 / Et1/99) protein is Ion-translocating oxidoreductase complex subunit G.